A 93-amino-acid chain; its full sequence is Small ribosomal subunit protein uS19 (93 aa).

The segment at Glu73–Arg93 is disordered. The span at His83–Arg93 shows a compositional bias: basic and acidic residues.

The protein belongs to the universal ribosomal protein uS19 family.

Its function is as follows. Protein S19 forms a complex with S13 that binds strongly to the 16S ribosomal RNA. The protein is Small ribosomal subunit protein uS19 of Streptomyces avermitilis (strain ATCC 31267 / DSM 46492 / JCM 5070 / NBRC 14893 / NCIMB 12804 / NRRL 8165 / MA-4680).